A 252-amino-acid chain; its full sequence is 3-dehydroquinate dehydratase (252 aa).

3-dehydroquinate-binding positions include S21, 46–48 (EWR), and R82. The active-site Proton donor/acceptor is H143. K170 (schiff-base intermediate with substrate) is an active-site residue. Positions 213, 232, and 236 each coordinate 3-dehydroquinate.

This sequence belongs to the type-I 3-dehydroquinase family. As to quaternary structure, homodimer.

It catalyses the reaction 3-dehydroquinate = 3-dehydroshikimate + H2O. It functions in the pathway metabolic intermediate biosynthesis; chorismate biosynthesis; chorismate from D-erythrose 4-phosphate and phosphoenolpyruvate: step 3/7. Involved in the third step of the chorismate pathway, which leads to the biosynthesis of aromatic amino acids. Catalyzes the cis-dehydration of 3-dehydroquinate (DHQ) and introduces the first double bond of the aromatic ring to yield 3-dehydroshikimate. This Escherichia coli O8 (strain IAI1) protein is 3-dehydroquinate dehydratase.